The following is a 144-amino-acid chain: Maximins 3/H16 (144 aa).

Positions 1 to 18 are cleaved as a signal peptide; the sequence is MNFKYIVAVSFLIASAYA. 2 consecutive propeptides follow at residues 19-43 and 73-122; these read RSVQ…REIR and RTAE…KKEK. Ile143 carries the isoleucine amide modification.

It belongs to the bombinin family. Expressed by the skin glands.

Its subcellular location is the secreted. In terms of biological role, maximin-3 shows antibacterial activity against both Gram-positive and Gram-negative bacteria. It also shows antimicrobial activity against the fungus C.albicans, but not against A.flavus nor P.uticale. It has little hemolytic activity. It possess a significant cytotoxicity against tumor cell lines. It possess a significant anti-HIV activity. It shows high spermicidal activity. Maximin-H16 shows antimicrobial activity against bacteria and against the fungus C.albicans. Shows strong hemolytic activity. The polypeptide is Maximins 3/H16 (Bombina maxima (Giant fire-bellied toad)).